Consider the following 87-residue polypeptide: Cell division topological specificity factor (87 aa).

The protein belongs to the MinE family.

Prevents the cell division inhibition by proteins MinC and MinD at internal division sites while permitting inhibition at polar sites. This ensures cell division at the proper site by restricting the formation of a division septum at the midpoint of the long axis of the cell. The protein is Cell division topological specificity factor of Acidiphilium cryptum (strain JF-5).